The following is a 100-amino-acid chain: uncharacterized protein (100 aa).

3 helical membrane-spanning segments follow: residues 7–28, 38–60, and 65–87; these read TLIG…LLSL, AQLS…ILII, and LSAL…ANGV.

The protein resides in the cell membrane. This is an uncharacterized protein from Archaeoglobus fulgidus (strain ATCC 49558 / DSM 4304 / JCM 9628 / NBRC 100126 / VC-16).